The sequence spans 319 residues: HTH-type transcriptional regulator YidZ (319 aa).

Positions 8–65 constitute an HTH lysR-type domain; sequence LDLNLLLCLQLLMQERSVTKAAKRMNVTPSAVSKSLAKLRAWFDDPLFVNSPLGLSPT. The segment at residues 25 to 44 is a DNA-binding region (H-T-H motif); that stretch reads VTKAAKRMNVTPSAVSKSLA.

It belongs to the LysR transcriptional regulatory family.

Involved in anaerobic NO protection. This Escherichia coli O17:K52:H18 (strain UMN026 / ExPEC) protein is HTH-type transcriptional regulator YidZ.